Consider the following 341-residue polypeptide: L-threonine 3-dehydrogenase (341 aa).

Cys38 serves as a coordination point for Zn(2+). Catalysis depends on charge relay system residues Thr40 and His43. Zn(2+) contacts are provided by His63, Glu64, Cys93, Cys96, Cys99, and Cys107. Residues Ile175, Asp195, Arg200, 262-264 (LGI), and 286-287 (IY) each bind NAD(+).

Belongs to the zinc-containing alcohol dehydrogenase family. Homotetramer. Zn(2+) serves as cofactor.

It is found in the cytoplasm. It catalyses the reaction L-threonine + NAD(+) = (2S)-2-amino-3-oxobutanoate + NADH + H(+). It functions in the pathway amino-acid degradation; L-threonine degradation via oxydo-reductase pathway; glycine from L-threonine: step 1/2. Catalyzes the NAD(+)-dependent oxidation of L-threonine to 2-amino-3-ketobutyrate. The protein is L-threonine 3-dehydrogenase of Escherichia coli O139:H28 (strain E24377A / ETEC).